We begin with the raw amino-acid sequence, 132 residues long: Small ribosomal subunit protein uS8 (132 aa).

Belongs to the universal ribosomal protein uS8 family. Part of the 30S ribosomal subunit. Contacts proteins S5 and S12.

One of the primary rRNA binding proteins, it binds directly to 16S rRNA central domain where it helps coordinate assembly of the platform of the 30S subunit. The chain is Small ribosomal subunit protein uS8 from Nitrobacter winogradskyi (strain ATCC 25391 / DSM 10237 / CIP 104748 / NCIMB 11846 / Nb-255).